Reading from the N-terminus, the 119-residue chain is Holo-[acyl-carrier-protein] synthase (119 aa).

Residues Asp8 and Glu60 each contribute to the Mg(2+) site.

Belongs to the P-Pant transferase superfamily. AcpS family. Mg(2+) serves as cofactor.

Its subcellular location is the cytoplasm. It catalyses the reaction apo-[ACP] + CoA = holo-[ACP] + adenosine 3',5'-bisphosphate + H(+). In terms of biological role, transfers the 4'-phosphopantetheine moiety from coenzyme A to a Ser of acyl-carrier-protein. The polypeptide is Holo-[acyl-carrier-protein] synthase (Staphylococcus haemolyticus (strain JCSC1435)).